A 159-amino-acid polypeptide reads, in one-letter code: Ribosomal RNA large subunit methyltransferase H (159 aa).

S-adenosyl-L-methionine contacts are provided by residues Leu-76, Gly-108, and 127 to 132 (FSKMTL).

This sequence belongs to the RNA methyltransferase RlmH family. As to quaternary structure, homodimer.

The protein resides in the cytoplasm. The catalysed reaction is pseudouridine(1915) in 23S rRNA + S-adenosyl-L-methionine = N(3)-methylpseudouridine(1915) in 23S rRNA + S-adenosyl-L-homocysteine + H(+). Its function is as follows. Specifically methylates the pseudouridine at position 1915 (m3Psi1915) in 23S rRNA. In Bacillus mycoides (strain KBAB4) (Bacillus weihenstephanensis), this protein is Ribosomal RNA large subunit methyltransferase H.